The sequence spans 173 residues: ATP synthase subunit b (173 aa).

A helical transmembrane segment spans residues 12–32 (LDVNPGLVVWTLITFLVVVLV).

The protein belongs to the ATPase B chain family. In terms of assembly, F-type ATPases have 2 components, F(1) - the catalytic core - and F(0) - the membrane proton channel. F(1) has five subunits: alpha(3), beta(3), gamma(1), delta(1), epsilon(1). F(0) has three main subunits: a(1), b(2) and c(10-14). The alpha and beta chains form an alternating ring which encloses part of the gamma chain. F(1) is attached to F(0) by a central stalk formed by the gamma and epsilon chains, while a peripheral stalk is formed by the delta and b chains.

The protein resides in the cell inner membrane. F(1)F(0) ATP synthase produces ATP from ADP in the presence of a proton or sodium gradient. F-type ATPases consist of two structural domains, F(1) containing the extramembraneous catalytic core and F(0) containing the membrane proton channel, linked together by a central stalk and a peripheral stalk. During catalysis, ATP synthesis in the catalytic domain of F(1) is coupled via a rotary mechanism of the central stalk subunits to proton translocation. In terms of biological role, component of the F(0) channel, it forms part of the peripheral stalk, linking F(1) to F(0). The polypeptide is ATP synthase subunit b (Leptospira borgpetersenii serovar Hardjo-bovis (strain JB197)).